The chain runs to 156 residues: Rhombotin-1 (156 aa).

LIM zinc-binding domains follow at residues 24 to 83 and 88 to 147; these read CAGC…RLFG and CAAC…EGQL.

As to expression, expressed mainly in the central nervous. Low level of expression in other tissues including thymus.

The protein resides in the nucleus. In terms of biological role, may be involved in gene regulation within neural lineage cells potentially by direct DNA binding or by binding to other transcription factors. In Homo sapiens (Human), this protein is Rhombotin-1 (LMO1).